A 301-amino-acid chain; its full sequence is Probable alpha-L-glutamate ligase 1 (301 aa).

An ATP-grasp domain is found at 104-287; sequence LQLLSRKGIG…VTEPIVEYIE (184 aa). Residues lysine 141, 178-179, aspartate 187, and 211-213 contribute to the ATP site; these read EY and RSN. Residues aspartate 248, glutamate 260, and asparagine 262 each coordinate Mg(2+). Aspartate 248, glutamate 260, and asparagine 262 together coordinate Mn(2+).

This sequence belongs to the RimK family. Mg(2+) serves as cofactor. Requires Mn(2+) as cofactor.

This is Probable alpha-L-glutamate ligase 1 from Shewanella sp. (strain W3-18-1).